A 269-amino-acid polypeptide reads, in one-letter code: Tryptophan synthase alpha chain (269 aa).

Active-site proton acceptor residues include glutamate 49 and aspartate 60.

The protein belongs to the TrpA family. In terms of assembly, tetramer of two alpha and two beta chains.

It carries out the reaction (1S,2R)-1-C-(indol-3-yl)glycerol 3-phosphate + L-serine = D-glyceraldehyde 3-phosphate + L-tryptophan + H2O. Its pathway is amino-acid biosynthesis; L-tryptophan biosynthesis; L-tryptophan from chorismate: step 5/5. Functionally, the alpha subunit is responsible for the aldol cleavage of indoleglycerol phosphate to indole and glyceraldehyde 3-phosphate. The chain is Tryptophan synthase alpha chain from Proteus mirabilis (strain HI4320).